The primary structure comprises 160 residues: MHVVYPGSFDPLTNGHLDVIQRASRLFEKVTVAVLENPSKRGQYLFSAEERLAIIREATAHLANVEAATFSGLLVDFVRRVGAQAIVKGLRAVSDYEYELQMAHLNRQLYPGLETLFILAATRYSFVSSTMVKEIARYGGDVSKLVPPATLRALKAKLGQ.

Ser8 provides a ligand contact to substrate. ATP-binding positions include 8–9 and His16; that span reads SF. Substrate-binding residues include Lys40, Leu74, and Lys88. ATP-binding positions include 89–91, Glu99, and 124–130; these read GLR and YSFVSST.

The protein belongs to the bacterial CoaD family. Homohexamer. Requires Mg(2+) as cofactor.

It is found in the cytoplasm. The catalysed reaction is (R)-4'-phosphopantetheine + ATP + H(+) = 3'-dephospho-CoA + diphosphate. It functions in the pathway cofactor biosynthesis; coenzyme A biosynthesis; CoA from (R)-pantothenate: step 4/5. Its function is as follows. Reversibly transfers an adenylyl group from ATP to 4'-phosphopantetheine, yielding dephospho-CoA (dPCoA) and pyrophosphate. The chain is Phosphopantetheine adenylyltransferase from Thermus thermophilus (strain ATCC BAA-163 / DSM 7039 / HB27).